Reading from the N-terminus, the 1397-residue chain is Centlein (1397 aa).

Disordered regions lie at residues 1-43 (MAAR…GLAG) and 56-76 (LWRG…GAAV). Ala2 carries the post-translational modification N-acetylalanine. Phosphoserine occurs at positions 5, 9, and 22. Coiled-coil stretches lie at residues 95-126 (EEAK…KEFV) and 405-481 (VVNL…KLMA). 2 disordered regions span residues 422–449 (LKEK…SGKA) and 485–521 (CDQD…SEEL). Over residues 485–503 (CDQDFSEKGTEGKHKEPPV) the composition is skewed to basic and acidic residues. Coiled coils occupy residues 674 to 778 (KNEK…KALR), 973 to 1114 (ISLR…MELL), and 1152 to 1299 (SESN…LKKM). Ser1219 is modified (phosphoserine). Thr1334 carries the post-translational modification Phosphothreonine.

As to quaternary structure, interacts with CEP250 and CEP68. Interacts with NEK2; the interaction leads to phosphorylation of CNTLN. Post-translationally, phosphorylated directly or indirectly by NEK2.

The protein localises to the cytoplasm. It localises to the cytoskeleton. The protein resides in the microtubule organizing center. It is found in the centrosome. Its subcellular location is the centriole. In terms of biological role, required for centrosome cohesion and recruitment of CEP68 to centrosomes. The polypeptide is Centlein (Mus musculus (Mouse)).